The primary structure comprises 437 residues: Adenylosuccinate synthetase (437 aa).

Residues 12 to 18 (GDEGKGK) and 40 to 42 (GHT) each bind GTP. D13 acts as the Proton acceptor in catalysis. Residues D13 and G40 each coordinate Mg(2+). Residues 13–16 (DEGK), 38–41 (NAGH), T128, R142, Q223, T238, and R302 contribute to the IMP site. The active-site Proton donor is the H41. Position 298 to 304 (298 to 304 (TTTGRRR)) interacts with substrate. Residues R304, 330–332 (KLD), and 412–414 (SLG) each bind GTP.

This sequence belongs to the adenylosuccinate synthetase family. As to quaternary structure, homodimer. Mg(2+) serves as cofactor.

It is found in the cytoplasm. It catalyses the reaction IMP + L-aspartate + GTP = N(6)-(1,2-dicarboxyethyl)-AMP + GDP + phosphate + 2 H(+). It functions in the pathway purine metabolism; AMP biosynthesis via de novo pathway; AMP from IMP: step 1/2. Plays an important role in the de novo pathway of purine nucleotide biosynthesis. Catalyzes the first committed step in the biosynthesis of AMP from IMP. The chain is Adenylosuccinate synthetase from Parasynechococcus marenigrum (strain WH8102).